The sequence spans 130 residues: Fluoride-specific ion channel FluC (130 aa).

The next 4 membrane-spanning stretches (helical) occupy residues 1 to 21 (MGEI…RYGL), 36 to 56 (GTLI…QWGF), 65 to 85 (LKLM…TFSY), and 103 to 123 (ILAN…LGSL). Na(+) is bound by residues glycine 75 and threonine 78.

This sequence belongs to the fluoride channel Fluc/FEX (TC 1.A.43) family.

It localises to the cell membrane. The catalysed reaction is fluoride(in) = fluoride(out). With respect to regulation, na(+) is not transported, but it plays an essential structural role and its presence is essential for fluoride channel function. Fluoride-specific ion channel. Important for reducing fluoride concentration in the cell, thus reducing its toxicity. In Dehalococcoides mccartyi (strain ATCC BAA-2266 / KCTC 15142 / 195) (Dehalococcoides ethenogenes (strain 195)), this protein is Fluoride-specific ion channel FluC.